The chain runs to 766 residues: BMP/retinoic acid-inducible neural-specific protein 3 (766 aa).

Residues 1–33 (MIWRRRAGAELSSLMALWEWIVLSLHCWVLAVA) form the signal peptide. The MACPF domain maps to 74 to 264 (RYKIYREFGR…FVQAALSYIA (191 aa)). 6 N-linked (GlcNAc...) asparagine glycosylation sites follow: asparagine 168, asparagine 337, asparagine 456, asparagine 562, asparagine 609, and asparagine 641.

Belongs to the BRINP family. Expressed in the brain. Weakly expressed in embryonic stem (ES) cells. Expressed in ES-derived neural stem cells (NSCs) and neuronal cells.

It localises to the secreted. The protein resides in the mitochondrion. Inhibits neuronal cell proliferation by negative regulation of the cell cycle transition. Promotes pituitary gonadotrope cell proliferation, migration and invasion, when overexpressed. May play a role in cell pituitary tumor development. The sequence is that of BMP/retinoic acid-inducible neural-specific protein 3 (Brinp3) from Mus musculus (Mouse).